Consider the following 160-residue polypeptide: Large ribosomal subunit protein uL22c (160 aa).

It belongs to the universal ribosomal protein uL22 family. As to quaternary structure, part of the 50S ribosomal subunit.

It is found in the plastid. Its subcellular location is the chloroplast. In terms of biological role, this protein binds specifically to 23S rRNA. The globular domain of the protein is located near the polypeptide exit tunnel on the outside of the subunit, while an extended beta-hairpin is found that lines the wall of the exit tunnel in the center of the 70S ribosome. This is Large ribosomal subunit protein uL22c (rpl22) from Olimarabidopsis pumila (Dwarf rocket).